A 234-amino-acid polypeptide reads, in one-letter code: uncharacterized protein (234 aa).

Helical transmembrane passes span Leu-25–Leu-45, Leu-57–Ala-77, Leu-85–Met-105, Ala-108–Tyr-128, Ala-142–Ser-162, Thr-163–Trp-183, and Trp-203–Leu-223.

The protein belongs to the BI1 family.

Its subcellular location is the cell membrane. This is an uncharacterized protein from Lactococcus lactis subsp. lactis (strain IL1403) (Streptococcus lactis).